The primary structure comprises 205 residues: Small heat shock protein hspG12 (205 aa).

One can recognise a sHSP domain in the interval 35-205 (KTIIDILPPM…YSNTIKININ (171 aa)). The segment at 99–147 (PSLLDTKEDEASIEEFDEDDIKPKSTETTSTLSNSKENKKDENKSKSTE) is disordered. Over residues 109–118 (ASIEEFDEDD) the composition is skewed to acidic residues. Residues 134 to 147 (KENKKDENKSKSTE) show a composition bias toward basic and acidic residues.

This sequence belongs to the small heat shock protein (HSP20) family.

This chain is Small heat shock protein hspG12 (hspG12), found in Dictyostelium discoideum (Social amoeba).